An 860-amino-acid polypeptide reads, in one-letter code: Elastin (860 aa).

A signal peptide spans Met1–Pro27. Residues Pro35 and Pro72 each carry the 4-hydroxyproline modification. The residue at position 84 (Pro84) is a Hydroxyproline. The residue at position 105 (Pro105) is a 4-hydroxyproline. Lys123 and Lys127 each carry allysine. Pro217, Pro230, Pro233, and Pro253 each carry 4-hydroxyproline. An allysine mark is found at Lys299, Lys318, and Lys321. Pro346 carries the 4-hydroxyproline modification. Allysine is present on residues Lys368 and Lys371. A Hydroxyproline modification is found at Pro383. 4-hydroxyproline is present on residues Pro399 and Pro405. A hydroxyproline mark is found at Pro410 and Pro415. Allysine occurs at positions 431, 435, 438, 481, and 484. 2 positions are modified to 4-hydroxyproline: Pro498 and Pro519. 4 positions are modified to allysine: Lys534, Lys595, Lys599, and Lys603. 4-hydroxyproline occurs at positions 617, 626, 644, 653, and 661. Allysine occurs at positions 668 and 671. Pro702 bears the 4-hydroxyproline mark. Residues Lys719, Lys723, Lys783, and Lys786 each carry the allysine modification. The residue at position 832 (Pro832) is a 4-hydroxyproline. An intrachain disulfide couples Cys850 to Cys855.

This sequence belongs to the elastin family. The polymeric elastin chains are cross-linked together into an extensible 3D network. Forms a ternary complex with BGN and MFAP2. Interacts with MFAP2 via divalent cations (calcium &gt; magnesium &gt; manganese) in a dose-dependent and saturating manner. Interacts with FBLN5 and FBN1. Forms a ternary complex with FBN1 and FBLN2 or FBLN5. Interacts with MFAP4 in a Ca (2+)-dependent manner; this interaction promotes ELN self-assembly. Interacts with EFEMP2 with moderate affinity. Elastin is formed through the cross-linking of its soluble precursor tropoelastin. Cross-linking is initiated through the action of lysyl oxidase on exposed lysines to form allysine. Subsequent spontaneous condensation reactions with other allysine or unmodified lysine residues result in various bi-, tri-, and tetrafunctional cross-links. The most abundant cross-links in mature elastin fibers are lysinonorleucine, allysine aldol, desmosine, and isodesmosine. In terms of processing, hydroxylation on proline residues within the sequence motif, GXPG, is most likely to be 4-hydroxy as this fits the requirement for 4-hydroxylation in vertebrates.

It is found in the secreted. The protein localises to the extracellular space. It localises to the extracellular matrix. In terms of biological role, major structural protein of tissues such as aorta and nuchal ligament, which must expand rapidly and recover completely. Molecular determinant of the late arterial morphogenesis, stabilizing arterial structure by regulating proliferation and organization of vascular smooth muscle. The protein is Elastin (Eln) of Mus musculus (Mouse).